The chain runs to 209 residues: uncharacterized protein (209 aa).

This is an uncharacterized protein from Caldicellulosiruptor saccharolyticus (Caldocellum saccharolyticum).